Reading from the N-terminus, the 364-residue chain is Mannose-1-phosphate guanyltransferase (364 aa).

The protein belongs to the transferase hexapeptide repeat family.

The protein resides in the cytoplasm. It carries out the reaction alpha-D-mannose 1-phosphate + GTP + H(+) = GDP-alpha-D-mannose + diphosphate. The protein operates within nucleotide-sugar biosynthesis; GDP-alpha-D-mannose biosynthesis; GDP-alpha-D-mannose from alpha-D-mannose 1-phosphate (GTP route): step 1/1. Involved in cell wall synthesis where it is required for glycosylation. Involved in cell cycle progression through cell-size checkpoint. In Aspergillus oryzae (strain ATCC 42149 / RIB 40) (Yellow koji mold), this protein is Mannose-1-phosphate guanyltransferase (mpg1).